The sequence spans 362 residues: 3-dehydroquinate synthase (362 aa).

NAD(+) contacts are provided by residues 71–76, 105–109, 129–130, Lys142, and Lys151; these read DGEQYK, GVIGD, and TT. Zn(2+) is bound by residues Glu184, His247, and His264.

The protein belongs to the sugar phosphate cyclases superfamily. Dehydroquinate synthase family. NAD(+) is required as a cofactor. Co(2+) serves as cofactor. Requires Zn(2+) as cofactor.

It is found in the cytoplasm. It catalyses the reaction 7-phospho-2-dehydro-3-deoxy-D-arabino-heptonate = 3-dehydroquinate + phosphate. It participates in metabolic intermediate biosynthesis; chorismate biosynthesis; chorismate from D-erythrose 4-phosphate and phosphoenolpyruvate: step 2/7. Catalyzes the conversion of 3-deoxy-D-arabino-heptulosonate 7-phosphate (DAHP) to dehydroquinate (DHQ). The sequence is that of 3-dehydroquinate synthase from Haemophilus ducreyi (strain 35000HP / ATCC 700724).